The sequence spans 485 residues: Trk system potassium uptake protein TrkH (485 aa).

Topologically, residues 1-2 (MQ) are cytoplasmic. The helical transmembrane segment at 3 to 29 (FRSIIRIVGLLLALFSVTMLAPALVAL) threads the bilayer. Residues 30–35 (LYRDGA) lie on the Periplasmic side of the membrane. The chain crosses the membrane as a helical span at residues 36 to 57 (GVPFVTTFFVLLFCGAMCWFPN). Topologically, residues 58–65 (RRHKHELK) are cytoplasmic. The helical transmembrane segment at 66–90 (SRDGFLIVVLFWTVLGSAGSLPFLI) threads the bilayer. The segment at residues 98–109 (VTDAFFESFSAL) is an intramembrane region (helical; Pore-forming). The stretch at 110–115 (TTTGAT) is an intramembrane region. The selectivity filter part 1 stretch occupies residues 110–115 (TTTGAT). K(+) contacts are provided by Thr-111 and Thr-112. At 116-124 (VIVGLDELP) the chain is on the periplasmic side. A helical transmembrane segment spans residues 125 to 150 (KAILFYRQFLQWFGGMGIIVLAVAIL). The Cytoplasmic portion of the chain corresponds to 151–177 (PVLGIGGMQLYRAEIPGPVKDTKMTPR). A helical membrane pass occupies residues 178-202 (IAETAKALWYIYLSLTIACAVAFWL). Topologically, residues 203-205 (AGM) are periplasmic. An intramembrane region is located at residue Thr-206. Positions 207 to 218 (PFDAISHSFSTI) form an intramembrane region, helical; Pore-forming. Residues 219–224 (AIGGFS) lie within the membrane without spanning it. A selectivity filter part 2 region spans residues 219–224 (AIGGFS). The K(+) site is built by Ile-220 and Gly-221. Topologically, residues 225–234 (THDASMGYFD) are periplasmic. Positions 235–250 (SYAINLITVVFLLISA) form an intramembrane region, helical. A helical transmembrane segment spans residues 276 to 296 (FRAFIFIQVLLFLVCFLLLLK). An intramembrane region (helical; Pore-forming) is located at residues 303–318 (PYDAFDQALFQTVSIS). An intramembrane segment occupies 319 to 324 (TTAGFT). A selectivity filter part 3 region spans residues 319-324 (TTAGFT). K(+)-binding residues include Thr-320 and Ala-321. At 325 to 332 (TTGFADWP) the chain is on the periplasmic side. The segment at residues 333–344 (LFLPVLLLFSSF) is an intramembrane region (helical). An intramembrane region (note=Loop between two helices) is located at residues 345-357 (IGGCAGSTGGGMK). The helical transmembrane segment at 392 to 419 (PQRVVDAVWGFFSAYALVFVVCMLGLIA) threads the bilayer. At 420–421 (TG) the chain is on the periplasmic side. An intramembrane segment occupies 422 to 423 (MD). An intramembrane region (helical; Pore-forming) is located at residues 424–434 (ELSAFSAVAAT). Residues 435-441 (LNNLGPG) lie within the membrane without spanning it. A selectivity filter part 4 region spans residues 436-441 (NNLGPG). The K(+) site is built by Asn-437 and Leu-438. The Periplasmic portion of the chain corresponds to 442 to 453 (LGEVALHFGDVN). An intramembrane region (helical) is located at residues 454–465 (DKAKWVLIVSML).

The protein belongs to the TrkH potassium transport family. In terms of assembly, homodimer.

The protein localises to the cell inner membrane. Low-affinity potassium transport system. Interacts with trk system potassium uptake protein TrkA and requires TrkE for transport activity. Selective for permeation of potassium ion and rubidium ion over smaller ions such as natrium or litium. This is Trk system potassium uptake protein TrkH from Vibrio parahaemolyticus serotype O3:K6 (strain RIMD 2210633).